The following is a 412-amino-acid chain: Lipid droplet organization protein LDO45 (412 aa).

Residues 1–170 (MAARNRRKNN…TVEKLNALQN (170 aa)) lie on the Cytoplasmic side of the membrane. The helical transmembrane segment at 171 to 191 (SLYEVFWIIFIYLNYWFPNVG) threads the bilayer. At 192–247 (DYVSNTFGQQDSIIIRISLSKSHFRALREKSSQKVQQAVKNIYFCFQEKPYLTAFK) the chain is on the lumenal side. The helical transmembrane segment at 248-268 (VSFAIGLVIPCSLLFLIMVST) threads the bilayer. Topologically, residues 269–271 (ATF) are cytoplasmic. Residues 272–292 (FFFVYLTLFVVIGFFSSLFII) traverse the membrane as a helical segment. Pro293 is a topological domain (lumenal). Residues 294-314 (LLGISFVFAIGVVSFGFCSNM) form a helical membrane-spanning segment. Residues 315–412 (SFKMAQLIYV…NKAGNKFQLS (98 aa)) are Cytoplasmic-facing. Positions 347–374 (QEPQEPLSTLRPVSNPTIPSPLRQTARP) are disordered. Positions 357–373 (RPVSNPTIPSPLRQTAR) are enriched in polar residues.

In terms of assembly, interacts specifically with the seipin complex FLD1-LDB16. Only a fraction appears to associate with the seipin core components, suggesting that it may be an ancillary subunit of the complex.

It localises to the endoplasmic reticulum membrane. It is found in the lipid droplet. Involved in lipid droplet (LD) organization. Modulates triglyceride (TAG) storage by reducing DGA1 LD localization. Promotes LD targeting of some proteins, including PDR16. The protein is Lipid droplet organization protein LDO45 of Saccharomyces cerevisiae (strain ATCC 204508 / S288c) (Baker's yeast).